The sequence spans 212 residues: NTVWPGTLTGDQKPQLSLTAFELASKASQSVDAPSPWSGRFWGRTRCSTDAAGKFSCETADCGSGQVACNGAGAVPPATLVEITIAANGGQDYYDVSLVDGFNLPMSVAPQGGTGECKPSSCPANVNMACPAQLQVKAADGSVISCKSACLAFGDSKYCCTPPNDTPETCPPTEYSEIFEKQCPQAYSYAYDDKNSTFTCSGGPDYVITFCP.

7 disulfides stabilise this stretch: Cys47–Cys57, Cys62–Cys69, Cys117–Cys200, Cys122–Cys183, Cys130–Cys146, Cys150–Cys159, and Cys160–Cys170.

The protein belongs to the thaumatin family.

It localises to the secreted. The sequence is that of Thaumatin-like protein 1b from Malus domestica (Apple).